We begin with the raw amino-acid sequence, 487 residues long: Probable glutamate receptor (487 aa).

The N-terminal stretch at 1–23 is a signal peptide; sequence MDKGQHFVFFVLTTVLLLRESSH. Residues 24 to 169 are Extracellular-facing; the sequence is AGAMRNDAAA…FFHFLAPFSK (146 aa). A glycan (N-linked (GlcNAc...) asparagine) is linked at N104. The helical transmembrane segment at 170–190 threads the bilayer; it reads ETWTGLLFAYILTCFCLFLVA. Topologically, residues 191–235 are cytoplasmic; that stretch reads RLSPCEWNEPKNEENHFTFLNSLWFGAGALALQGVTPRPKALSVR. The helical transmembrane segment at 236–256 threads the bilayer; the sequence is VIAAIWWLFTIALLAAYIANF. Residues 257-419 are Extracellular-facing; the sequence is TALLSSGSEQ…ERWSPLQPQA (163 aa). A helical membrane pass occupies residues 420–440; it reads LGGLFLTLAIGLALGVIAAVV. Over 441 to 487 the chain is Cytoplasmic; it reads ELSNKSRHAAGHVKKSCCSIFTEEMCTRLRIKENTRQSQETSGRANA.

The protein belongs to the glutamate-gated ion channel (TC 1.A.10.1) family.

The protein localises to the cell membrane. Its subcellular location is the postsynaptic cell membrane. In terms of biological role, receptor for glutamate. L-glutamate acts as an excitatory neurotransmitter at many synapses in the central nervous system. The postsynaptic actions of Glu are mediated by a variety of receptors that are named according to their selective agonists. The sequence is that of Probable glutamate receptor (KBP) from Anas platyrhynchos (Mallard).